The sequence spans 761 residues: MIAVLQNPQNAAISYSGEPQEHNLLGSYETKAPNVETSEIAASSSSSEAPEDLAEEHHRNEASLQQPLSEVDRHEQPAASDNTRSGLDIPPVTVSTPQSSDNPLVESKEAVPVTFKDEGKGTKADPSHLLTEALETTNGEENSPISEDEATAIAVLKVIERYGVNFEKTGESWQGLTSFIPTVVEQVKKREAVRMILPAFPFKSPNARDKVLGVMPDLGEELALYHLNGLCENIGRVYEPGADVYISSDGLVYNDILGVPDETVWEYGEALRRMAVEKELHHVKFIRLFELLEHPWIPLTSAEQAKSYYLAHAQCLRRELMYRFEDRSFDADAAIRSDNDTCLTYRGYIKFLTKDLAPQMDTQYTSKKARAAHIAQIARSMIVRGKMFAAAIKANRADYVRLSIHESNGARKLSISLVPQVRGVLGYTPWHSSIAVDADGTLRAVHAEDVRETHELVYKNGQPYYFREKSKLFDWVEDGLRVKFEPLYPCGLIIRPSDIDDSRPPPSISHLPMHKVRQLSTGLSPVVLRGFRETLKEELYVQKASELGTILPWSFGIIQKVRDAGRTDKLGNNVTSNEAMPMHYDGMFKFEEETDPVTGEVKRVQKPPGYQFFTCPATAPKGSGYTLFASSRLFFRYLPLPWTTERLQKVTWGMDNDGFWDAKLKNLPLVVPHPVTGLPCMRWHQPWDSTKTKFSTCAVTIENDEQELASVVDDLTYDYRVCLRFSWEQGDLLVSDNTAMLHTRTGYKTNCERELWRIHFD.

Residues leucine 24–histidine 128 are disordered. Positions glutamate 36–glutamate 48 are enriched in low complexity. The segment covering threonine 93–asparagine 102 has biased composition (polar residues). Over residues phenylalanine 115–proline 126 the composition is skewed to basic and acidic residues.

This sequence belongs to the isocyanide synthase family.

Its pathway is secondary metabolite biosynthesis. Its function is as follows. Isocyanide synthase; part of the gene cluster that mediates the biosynthesis of the isocyanide xanthocillin and its derivatives. The first step of the pathway consists in the conversion of tyrosine into a vinyl-isonitrile intermediate by the isocyanide synthase xanB. Subsequent oxidative dimerization of this intermediate to form xanthocillin may involve the cytochrome P450 monooxygenase xanG, whose expression is coregulated with that of XanB. Xanthocillin can be further modified by the isonitrile hydratase-like protein xanA which introduces N-formyl groups and the methyltransferase xanE which introduces methyl groups, leading to the production of several derivatives including fumiformamide. Finally, fumiformamide can be subject to both oxidative and reductive cyclization to yield melanocins E and F, respectively. In Aspergillus fumigatus (strain ATCC MYA-4609 / CBS 101355 / FGSC A1100 / Af293) (Neosartorya fumigata), this protein is Isocyanide synthase xanB.